Reading from the N-terminus, the 596-residue chain is Elongation factor 4 (596 aa).

Residues 2 to 184 (KHIRNFSIIA…TIVAQIPSPE (183 aa)) enclose the tr-type G domain. GTP contacts are provided by residues 14–19 (DHGKST) and 131–134 (NKID).

The protein belongs to the TRAFAC class translation factor GTPase superfamily. Classic translation factor GTPase family. LepA subfamily.

The protein resides in the cell inner membrane. The enzyme catalyses GTP + H2O = GDP + phosphate + H(+). Functionally, required for accurate and efficient protein synthesis under certain stress conditions. May act as a fidelity factor of the translation reaction, by catalyzing a one-codon backward translocation of tRNAs on improperly translocated ribosomes. Back-translocation proceeds from a post-translocation (POST) complex to a pre-translocation (PRE) complex, thus giving elongation factor G a second chance to translocate the tRNAs correctly. Binds to ribosomes in a GTP-dependent manner. This chain is Elongation factor 4, found in Shewanella amazonensis (strain ATCC BAA-1098 / SB2B).